A 223-amino-acid chain; its full sequence is MKVAIIRFPGTNCEFDTTYAFEKLGVKTQIVWHEEKEFDADLVVLPGGFSYGDYLRCAAIAKLAPAMQGVFNHAKKGGYILGICNGFQILLESGLLKGAMKHNNNLSFISKNQSLRVVSNDNAFLKNFKKDEIINLPIAHGEGNYYADETTLKELQDKDLIILKYEPNPNGSVFDIAGICDENKKIFGLMPHPERACEKVLGNDVGLKMLKGFLLENFINFNF.

A Glutamine amidotransferase type-1 domain is found at 2–223; the sequence is KVAIIRFPGT…LLENFINFNF (222 aa). The Nucleophile role is filled by Cys-84. Residues His-192 and Glu-194 contribute to the active site.

As to quaternary structure, part of the FGAM synthase complex composed of 1 PurL, 1 PurQ and 2 PurS subunits.

The protein localises to the cytoplasm. It catalyses the reaction N(2)-formyl-N(1)-(5-phospho-beta-D-ribosyl)glycinamide + L-glutamine + ATP + H2O = 2-formamido-N(1)-(5-O-phospho-beta-D-ribosyl)acetamidine + L-glutamate + ADP + phosphate + H(+). It carries out the reaction L-glutamine + H2O = L-glutamate + NH4(+). It functions in the pathway purine metabolism; IMP biosynthesis via de novo pathway; 5-amino-1-(5-phospho-D-ribosyl)imidazole from N(2)-formyl-N(1)-(5-phospho-D-ribosyl)glycinamide: step 1/2. Its function is as follows. Part of the phosphoribosylformylglycinamidine synthase complex involved in the purines biosynthetic pathway. Catalyzes the ATP-dependent conversion of formylglycinamide ribonucleotide (FGAR) and glutamine to yield formylglycinamidine ribonucleotide (FGAM) and glutamate. The FGAM synthase complex is composed of three subunits. PurQ produces an ammonia molecule by converting glutamine to glutamate. PurL transfers the ammonia molecule to FGAR to form FGAM in an ATP-dependent manner. PurS interacts with PurQ and PurL and is thought to assist in the transfer of the ammonia molecule from PurQ to PurL. This chain is Phosphoribosylformylglycinamidine synthase subunit PurQ, found in Campylobacter jejuni subsp. jejuni serotype O:2 (strain ATCC 700819 / NCTC 11168).